We begin with the raw amino-acid sequence, 239 residues long: Sugar fermentation stimulation protein homolog (239 aa).

Belongs to the SfsA family.

The protein is Sugar fermentation stimulation protein homolog of Synechococcus sp. (strain JA-2-3B'a(2-13)) (Cyanobacteria bacterium Yellowstone B-Prime).